The primary structure comprises 379 residues: Lipid-A-disaccharide synthase (379 aa).

This sequence belongs to the LpxB family.

It carries out the reaction a lipid X + a UDP-2-N,3-O-bis[(3R)-3-hydroxyacyl]-alpha-D-glucosamine = a lipid A disaccharide + UDP + H(+). It participates in bacterial outer membrane biogenesis; LPS lipid A biosynthesis. Condensation of UDP-2,3-diacylglucosamine and 2,3-diacylglucosamine-1-phosphate to form lipid A disaccharide, a precursor of lipid A, a phosphorylated glycolipid that anchors the lipopolysaccharide to the outer membrane of the cell. The chain is Lipid-A-disaccharide synthase from Pseudomonas fluorescens (strain SBW25).